The sequence spans 199 residues: Imidazoleglycerol-phosphate dehydratase (199 aa).

The protein belongs to the imidazoleglycerol-phosphate dehydratase family.

It localises to the cytoplasm. It carries out the reaction D-erythro-1-(imidazol-4-yl)glycerol 3-phosphate = 3-(imidazol-4-yl)-2-oxopropyl phosphate + H2O. It participates in amino-acid biosynthesis; L-histidine biosynthesis; L-histidine from 5-phospho-alpha-D-ribose 1-diphosphate: step 6/9. This chain is Imidazoleglycerol-phosphate dehydratase, found in Roseiflexus sp. (strain RS-1).